The primary structure comprises 661 residues: Altered inheritance of mitochondria protein 3-1 (661 aa).

7 disordered regions span residues 19–99 (TKTV…YSGY), 116–142 (AQNTPYSSPAQQQPVSPQPPVQNSQYN), 154–194 (QPAG…TFQS), 263–419 (LPQQ…DSSS), 431–473 (RNIP…SPGI), 487–563 (YAGH…RKDN), and 615–661 (EAAT…FVHS). A compositionally biased stretch (basic and acidic residues) spans 37 to 58 (KDKDTHHTDHHEEDEYSEDYHT). Low complexity predominate over residues 120–142 (PYSSPAQQQPVSPQPPVQNSQYN). Over residues 263-318 (LPQQQQQQQQQPEYNTQLQQNQQLHNQQAYGQQQQIYSNNTQPQYVSQTQQTSYTQ) the composition is skewed to low complexity. Composition is skewed to polar residues over residues 319-328 (NAPPQQTRSP) and 356-371 (VNQTAITSTNSANEAL). Positions 390 to 399 (THRDRGRASV) are enriched in basic and acidic residues. Over residues 406 to 419 (ENMQTNNSTIDSSS) the composition is skewed to polar residues. Positions 434 to 447 (PAPAVGPPGAATRA) are enriched in low complexity. Composition is skewed to polar residues over residues 458-473 (SQSMSTNSVVETSPGI), 512-533 (RSTSTKMNTQPNPQTPISPSRD), and 541-552 (RSTVSSIQSSNR).

The protein belongs to the AIM3 family.

The protein localises to the membrane raft. The chain is Altered inheritance of mitochondria protein 3-1 (AIM3-1) from Candida glabrata (strain ATCC 2001 / BCRC 20586 / JCM 3761 / NBRC 0622 / NRRL Y-65 / CBS 138) (Yeast).